Consider the following 772-residue polypeptide: Probable adenosine deaminase (772 aa).

2 residues coordinate Zn(2+): H22 and H24. Substrate contacts are provided by H24, D26, and G180. H207 lines the Zn(2+) pocket. E210 acts as the Proton donor in catalysis. D288 is a Zn(2+) binding site.

The protein belongs to the metallo-dependent hydrolases superfamily. Adenosine and AMP deaminases family. Zn(2+) serves as cofactor.

It catalyses the reaction adenosine + H2O + H(+) = inosine + NH4(+). Functionally, catalyzes the hydrolytic deamination of adenosine. Plays an important role in purine metabolism and in adenosine homeostasis, and may thereby contribute to cellular signaling events. The polypeptide is Probable adenosine deaminase (ada) (Dictyostelium discoideum (Social amoeba)).